The sequence spans 490 residues: Aspartyl/glutamyl-tRNA(Asn/Gln) amidotransferase subunit B (490 aa).

The protein belongs to the GatB/GatE family. GatB subfamily. Heterotrimer of A, B and C subunits.

The enzyme catalyses L-glutamyl-tRNA(Gln) + L-glutamine + ATP + H2O = L-glutaminyl-tRNA(Gln) + L-glutamate + ADP + phosphate + H(+). The catalysed reaction is L-aspartyl-tRNA(Asn) + L-glutamine + ATP + H2O = L-asparaginyl-tRNA(Asn) + L-glutamate + ADP + phosphate + 2 H(+). Functionally, allows the formation of correctly charged Asn-tRNA(Asn) or Gln-tRNA(Gln) through the transamidation of misacylated Asp-tRNA(Asn) or Glu-tRNA(Gln) in organisms which lack either or both of asparaginyl-tRNA or glutaminyl-tRNA synthetases. The reaction takes place in the presence of glutamine and ATP through an activated phospho-Asp-tRNA(Asn) or phospho-Glu-tRNA(Gln). The protein is Aspartyl/glutamyl-tRNA(Asn/Gln) amidotransferase subunit B of Symbiobacterium thermophilum (strain DSM 24528 / JCM 14929 / IAM 14863 / T).